We begin with the raw amino-acid sequence, 26 residues long: uncharacterized protein (26 aa).

The segment covering 1 to 16 has biased composition (polar residues); it reads MPEQKANCSPNGNITV. The tract at residues 1–26 is disordered; it reads MPEQKANCSPNGNITVDSMIMSLGSS.

This is an uncharacterized protein from Saccharomyces cerevisiae (strain ATCC 204508 / S288c) (Baker's yeast).